A 163-amino-acid chain; its full sequence is NADH-quinone oxidoreductase subunit I (163 aa).

4Fe-4S ferredoxin-type domains lie at 54-84 (LRRY…IDSA) and 94-123 (TRYD…ETHI). Residues cysteine 64, cysteine 67, cysteine 70, cysteine 74, cysteine 103, cysteine 106, cysteine 109, and cysteine 113 each contribute to the [4Fe-4S] cluster site.

The protein belongs to the complex I 23 kDa subunit family. In terms of assembly, NDH-1 is composed of 14 different subunits. Subunits NuoA, H, J, K, L, M, N constitute the membrane sector of the complex. Requires [4Fe-4S] cluster as cofactor.

It localises to the cell inner membrane. It carries out the reaction a quinone + NADH + 5 H(+)(in) = a quinol + NAD(+) + 4 H(+)(out). In terms of biological role, NDH-1 shuttles electrons from NADH, via FMN and iron-sulfur (Fe-S) centers, to quinones in the respiratory chain. The immediate electron acceptor for the enzyme in this species is believed to be ubiquinone. Couples the redox reaction to proton translocation (for every two electrons transferred, four hydrogen ions are translocated across the cytoplasmic membrane), and thus conserves the redox energy in a proton gradient. This is NADH-quinone oxidoreductase subunit I from Xanthomonas oryzae pv. oryzae (strain KACC10331 / KXO85).